Consider the following 294-residue polypeptide: Lipoyl synthase (294 aa).

Cys35, Cys40, Cys46, Cys61, Cys65, Cys68, and Ser275 together coordinate [4Fe-4S] cluster. Residues 46 to 264 (CWGGGTATVM…REAGLGLGFR (219 aa)) enclose the Radical SAM core domain.

The protein belongs to the radical SAM superfamily. Lipoyl synthase family. The cofactor is [4Fe-4S] cluster.

It localises to the cytoplasm. It carries out the reaction [[Fe-S] cluster scaffold protein carrying a second [4Fe-4S](2+) cluster] + N(6)-octanoyl-L-lysyl-[protein] + 2 oxidized [2Fe-2S]-[ferredoxin] + 2 S-adenosyl-L-methionine + 4 H(+) = [[Fe-S] cluster scaffold protein] + N(6)-[(R)-dihydrolipoyl]-L-lysyl-[protein] + 4 Fe(3+) + 2 hydrogen sulfide + 2 5'-deoxyadenosine + 2 L-methionine + 2 reduced [2Fe-2S]-[ferredoxin]. It participates in protein modification; protein lipoylation via endogenous pathway; protein N(6)-(lipoyl)lysine from octanoyl-[acyl-carrier-protein]: step 2/2. Functionally, catalyzes the radical-mediated insertion of two sulfur atoms into the C-6 and C-8 positions of the octanoyl moiety bound to the lipoyl domains of lipoate-dependent enzymes, thereby converting the octanoylated domains into lipoylated derivatives. This is Lipoyl synthase from Anaeromyxobacter sp. (strain Fw109-5).